The primary structure comprises 359 residues: Ribosomal RNA large subunit methyltransferase M (359 aa).

S-adenosyl-L-methionine is bound by residues S186, 219 to 222 (CPGG), D238, D258, and D275. K304 (proton acceptor) is an active-site residue.

This sequence belongs to the class I-like SAM-binding methyltransferase superfamily. RNA methyltransferase RlmE family. RlmM subfamily. As to quaternary structure, monomer.

It is found in the cytoplasm. It catalyses the reaction cytidine(2498) in 23S rRNA + S-adenosyl-L-methionine = 2'-O-methylcytidine(2498) in 23S rRNA + S-adenosyl-L-homocysteine + H(+). Functionally, catalyzes the 2'-O-methylation at nucleotide C2498 in 23S rRNA. The chain is Ribosomal RNA large subunit methyltransferase M from Aliivibrio fischeri (strain MJ11) (Vibrio fischeri).